Reading from the N-terminus, the 384-residue chain is MSVVGIVAEYNPFHSGHEFLMNQARLIAGDDPIIAVMSGNYVQRGEMAILDKWSRARSAIEAGADLVFELPFSYAVQAADMFATGGVDLLTRLGAKNLVFGVEDANLNFEYFGDRISKIPRQRQEFADYSQTYSTQYNQMVAREIGHEVSEPNAILGLAYAVANANLGSPLKLSPVNRVGAGHDEILQREAVVQSASAIRNLLLNGAERSELEQWLPKGEIAAFDQEKVLPNWELLFPFLKYRLESASIKELQQIYQMSEGLEYKFKAEIHLAENFADFLRRVKSKRYTYSRLRRLSLYTLLNVTEADVLNSYDHVSTMLLAYSKRGRKYLKQQRKDFEIDIVSKVDRKNAQEGTLGLKVRVDRLFEQIVGADQNFGRRPLEVN.

ATP is bound by residues 7–20 (VAEY…HEFL), Gly-101, Asn-153, and Arg-178.

Belongs to the TmcAL family.

The protein localises to the cytoplasm. The enzyme catalyses cytidine(34) in elongator tRNA(Met) + acetate + ATP = N(4)-acetylcytidine(34) in elongator tRNA(Met) + AMP + diphosphate. In terms of biological role, catalyzes the formation of N(4)-acetylcytidine (ac(4)C) at the wobble position of elongator tRNA(Met), using acetate and ATP as substrates. First activates an acetate ion to form acetyladenylate (Ac-AMP) and then transfers the acetyl group to tRNA to form ac(4)C34. The chain is tRNA(Met) cytidine acetate ligase from Lactobacillus delbrueckii subsp. bulgaricus (strain ATCC 11842 / DSM 20081 / BCRC 10696 / JCM 1002 / NBRC 13953 / NCIMB 11778 / NCTC 12712 / WDCM 00102 / Lb 14).